Here is a 629-residue protein sequence, read N- to C-terminus: tRNA uridine 5-carboxymethylaminomethyl modification enzyme MnmG (629 aa).

FAD is bound by residues 13 to 18 (GGGHAG), Val-125, and Ser-180. An NAD(+)-binding site is contributed by 273–287 (GPRYCPSIEDKVMRF). Residue Gln-370 coordinates FAD.

It belongs to the MnmG family. Homodimer. Heterotetramer of two MnmE and two MnmG subunits. FAD is required as a cofactor.

The protein localises to the cytoplasm. Its function is as follows. NAD-binding protein involved in the addition of a carboxymethylaminomethyl (cmnm) group at the wobble position (U34) of certain tRNAs, forming tRNA-cmnm(5)s(2)U34. In Escherichia coli O45:K1 (strain S88 / ExPEC), this protein is tRNA uridine 5-carboxymethylaminomethyl modification enzyme MnmG.